We begin with the raw amino-acid sequence, 186 residues long: Ribulose bisphosphate carboxylase small subunit, chloroplastic 6 (186 aa).

A chloroplast-targeting transit peptide spans 1–60 (MASSMLSNAAVATTAASRSAGAQASMVAPFTGLKSVSAFPVTRKSSNDLSTVPSNGGKVQ).

The protein belongs to the RuBisCO small chain family. Heterohexadecamer of 8 large and 8 small subunits.

It localises to the plastid. Its subcellular location is the chloroplast. Functionally, ruBisCO catalyzes two reactions: the carboxylation of D-ribulose 1,5-bisphosphate, the primary event in carbon dioxide fixation, as well as the oxidative fragmentation of the pentose substrate. Both reactions occur simultaneously and in competition at the same active site. Although the small subunit is not catalytic it is essential for maximal activity. This chain is Ribulose bisphosphate carboxylase small subunit, chloroplastic 6, found in Mesembryanthemum crystallinum (Common ice plant).